A 533-amino-acid polypeptide reads, in one-letter code: Lysophosphatidylcholine acyltransferase (533 aa).

Residues 1–79 (MTTSTIKPTG…VLTVLLLPIR (79 aa)) lie on the Cytoplasmic side of the membrane. Residues 80 to 100 (VVGCVLSLISAWMFACIGLYG) form a helical; Signal-anchor for type II membrane protein membrane-spanning segment. Residues 101–533 (MTLDDLKAKP…PKAVVTTAEN (433 aa)) are Lumenal-facing. The HXXXXD motif motif lies at 158–163 (HSSYVD). EF-hand domains are found at residues 402 to 437 (LKNT…CKLK), 439 to 474 (SDLL…AGGK), and 475 to 510 (LNEQ…QKSS).

This sequence belongs to the 1-acyl-sn-glycerol-3-phosphate acyltransferase family.

It is found in the endoplasmic reticulum membrane. Its subcellular location is the golgi apparatus membrane. The protein resides in the lipid droplet. The enzyme catalyses a 1-acyl-sn-glycero-3-phosphocholine + an acyl-CoA = a 1,2-diacyl-sn-glycero-3-phosphocholine + CoA. It participates in lipid metabolism; phospholipid metabolism. Functionally, acetyltransferase which mediates the conversion of 1-acyl-sn-glycero-3-phosphocholine (LPC) into phosphatidylcholine (PC). Has a calcium-independent activity. Displays a clear preference for saturated fatty acyl-CoAs, and 1-myristoyl or 1-palmitoyl LPC as acyl donors and acceptors, respectively. Involved in the regulation of lipid droplet number and size. This Drosophila melanogaster (Fruit fly) protein is Lysophosphatidylcholine acyltransferase.